A 196-amino-acid polypeptide reads, in one-letter code: Molybdenum cofactor guanylyltransferase (196 aa).

GTP contacts are provided by residues Leu10–Gly12, Lys23, Asn51, Asp69, and Asp99. Asp99 serves as a coordination point for Mg(2+).

Belongs to the MobA family. In terms of assembly, monomer. The cofactor is Mg(2+).

It is found in the cytoplasm. It carries out the reaction Mo-molybdopterin + GTP + H(+) = Mo-molybdopterin guanine dinucleotide + diphosphate. Its function is as follows. Transfers a GMP moiety from GTP to Mo-molybdopterin (Mo-MPT) cofactor (Moco or molybdenum cofactor) to form Mo-molybdopterin guanine dinucleotide (Mo-MGD) cofactor. The polypeptide is Molybdenum cofactor guanylyltransferase (Shewanella baltica (strain OS185)).